A 165-amino-acid chain; its full sequence is Chorismate pyruvate-lyase (165 aa).

Substrate is bound by residues methionine 35, arginine 77, leucine 115, and glutamate 156.

It belongs to the UbiC family. As to quaternary structure, monomer.

It is found in the cytoplasm. The enzyme catalyses chorismate = 4-hydroxybenzoate + pyruvate. The protein operates within cofactor biosynthesis; ubiquinone biosynthesis. Removes the pyruvyl group from chorismate, with concomitant aromatization of the ring, to provide 4-hydroxybenzoate (4HB) for the ubiquinone pathway. The polypeptide is Chorismate pyruvate-lyase (Shigella boydii serotype 18 (strain CDC 3083-94 / BS512)).